The sequence spans 3206 residues: Highly reducing polyketide synthase ltbA (3206 aa).

The region spanning 5–434 (PAPIAIIGVG…GTNCHVILEA (430 aa)) is the Ketosynthase family 3 (KS3) domain. Active-site for beta-ketoacyl synthase activity residues include Cys-179, His-314, and His-354. Residues 441–463 (PTGTNGIKTNGTRINGIKTNGAD) are compositionally biased toward polar residues. Positions 441-472 (PTGTNGIKTNGTRINGIKTNGADTNERESMKN) are disordered. The tract at residues 575 to 890 (VFSGQGAQWH…EYLSALQRNT (316 aa)) is malonyl-CoA:ACP transacylase (MAT) domain. The interval 958–1098 (HDLLGLFDPA…GEITVEYETD (141 aa)) is N-terminal hotdog fold. The segment at 958-1278 (HDLLGLFDPA…LLVNLRAIGE (321 aa)) is dehydratase (DH) domain. The PKS/mFAS DH domain occupies 958 to 1284 (HDLLGLFDPA…AIGETREDED (327 aa)). Residue His-990 is the Proton acceptor; for dehydratase activity of the active site. A C-terminal hotdog fold region spans residues 1128–1284 (DTDMTKSEFY…AIGETREDED (157 aa)). Asp-1193 (proton donor; for dehydratase activity) is an active-site residue. The methyltransferase (CMet) domain stretch occupies residues 1450–1640 (ESGILVGPYE…LARNGFGGIH (191 aa)). An enoyl reductase (ER) domain region spans residues 1871–2185 (LLSSLRFVDD…RKHTGKVVLQ (315 aa)). Residues 2208-2395 (GTYVAAGGLG…SVDAHGALKE (188 aa)) form a ketoreductase (KR) domain region. The 79-residue stretch at 2499 to 2577 (EEAEQLIRDA…ALAATVASRS (79 aa)) folds into the Carrier domain. Ser-2537 is subject to O-(pantetheine 4'-phosphoryl)serine. The segment at 2584–2611 (IRHSSRLQEATTQAENKDAPKNEKEGPS) is disordered. Residues 2598–2610 (ENKDAPKNEKEGP) are compositionally biased toward basic and acidic residues. A carnitine O-acyltransferase (cAT) domain region spans residues 2994-3206 (HLIPSFGKAV…IKTIIQAGQE (213 aa)).

Pantetheine 4'-phosphate is required as a cofactor.

It participates in secondary metabolite biosynthesis. In terms of biological role, highly reducing polyketide synthase; part of the gene cluster that mediates the biosynthesis of luteodienoside A, a glycosylated polyketide consisting of an unusual 1-O-beta-D-glucopyranosyl-myo-inositol (glucinol) ester of 3-hydroxy-2,2,4-trimethylocta-4,6-dienoic acid. LtbA produces the trimethylated polyketide chain from acetyl-CoA, malonyl-CoA and S-adenosylmethionine (SAM). The ltbA carnitine O-acyltransferase (cAT) domain then uses glucinol produced by the glycosyltransferase ltbB as an offloading substrate to release luteodienoside A. Furthermore, the PKS C-methyltransferase (CMeT) domain is capable of catalysing gem-dimethylation of the 3-hydroxy-2,2,4-trimethylocta-4,6-dienoic acid intermediate, without requiring reversible product release and recapture by the cAT domain. Since ltbA and ltbB are sufficient for the biosynthesis of luteodienoside A, the functions of the methyltransferase ltbC and the FAD-binding monooxygenase ltbD within the pathway remain obscur. This is Highly reducing polyketide synthase ltbA from Aspergillus luteorubrus.